The chain runs to 231 residues: Elongation factor 1-delta 1 (231 aa).

Residue Ala-2 is modified to N-acetylalanine. Positions 10-73 (DAGLKKLDEH…LRISGVSAEG (64 aa)) constitute a GST C-terminal domain. Disordered stretches follow at residues 85–108 (TEEAVATPPAADSKDAAADEEDDD) and 116–135 (ETEEEKKAAEERAASVKAST). The span at 119–129 (EEKKAAEERAA) shows a compositional bias: basic and acidic residues.

It belongs to the EF-1-beta/EF-1-delta family. In terms of assembly, EF-1 is composed of 4 subunits: alpha, beta (1B-alpha=beta'), delta (1B-beta), and gamma (1B-gamma).

Functionally, EF-1-beta and EF-1-delta stimulate the exchange of GDP bound to EF-1-alpha to GTP. The polypeptide is Elongation factor 1-delta 1 (Arabidopsis thaliana (Mouse-ear cress)).